The chain runs to 448 residues: Ribosomal protein uS12 methylthiotransferase RimO (448 aa).

In terms of domain architecture, MTTase N-terminal spans 7–123; it reads EKVSLVSLGC…IAEIIAEKEG (117 aa). Positions 16, 52, 86, 161, 165, and 168 each coordinate [4Fe-4S] cluster. Residues 147–377 form the Radical SAM core domain; it reads SSPYYTAYLK…MRTQARVSFK (231 aa). Residues 380-448 enclose the TRAM domain; that stretch reads RSLVDTEELV…DYDLIGEIVP (69 aa).

The protein belongs to the methylthiotransferase family. RimO subfamily. Requires [4Fe-4S] cluster as cofactor.

The protein localises to the cytoplasm. It catalyses the reaction L-aspartate(89)-[ribosomal protein uS12]-hydrogen + (sulfur carrier)-SH + AH2 + 2 S-adenosyl-L-methionine = 3-methylsulfanyl-L-aspartate(89)-[ribosomal protein uS12]-hydrogen + (sulfur carrier)-H + 5'-deoxyadenosine + L-methionine + A + S-adenosyl-L-homocysteine + 2 H(+). Catalyzes the methylthiolation of an aspartic acid residue of ribosomal protein uS12. In Geotalea uraniireducens (strain Rf4) (Geobacter uraniireducens), this protein is Ribosomal protein uS12 methylthiotransferase RimO.